The chain runs to 71 residues: uncharacterized protein (71 aa).

Residues 24 to 44 (FGGGGLSTAIYSIFAFFSIPL) form a helical membrane-spanning segment.

The protein localises to the membrane. This is an uncharacterized protein from Schizosaccharomyces pombe (strain 972 / ATCC 24843) (Fission yeast).